Consider the following 201-residue polypeptide: Small ribosomal subunit protein uS4 (201 aa).

The disordered stretch occupies residues 1–42 (MARYTGPATRKSRRLGVDLVGGDQSFEKRPYPPGQHGRARIK). The region spanning 91–157 (SRLDNVVYRA…LPFQIARETA (67 aa)) is the S4 RNA-binding domain.

The protein belongs to the universal ribosomal protein uS4 family. In terms of assembly, part of the 30S ribosomal subunit. Contacts protein S5. The interaction surface between S4 and S5 is involved in control of translational fidelity.

In terms of biological role, one of the primary rRNA binding proteins, it binds directly to 16S rRNA where it nucleates assembly of the body of the 30S subunit. Functionally, with S5 and S12 plays an important role in translational accuracy. The polypeptide is Small ribosomal subunit protein uS4 (Mycolicibacterium smegmatis (strain ATCC 700084 / mc(2)155) (Mycobacterium smegmatis)).